The sequence spans 625 residues: Phosphomethylpyrimidine synthase (625 aa).

Residues asparagine 231, methionine 260, tyrosine 289, histidine 325, 345-347 (SRG), 386-389 (DGLR), and glutamate 425 contribute to the substrate site. Histidine 429 is a binding site for Zn(2+). Residue tyrosine 452 participates in substrate binding. Zn(2+) is bound at residue histidine 493. Positions 573, 576, and 581 each coordinate [4Fe-4S] cluster.

It belongs to the ThiC family. As to quaternary structure, homodimer. [4Fe-4S] cluster is required as a cofactor.

It carries out the reaction 5-amino-1-(5-phospho-beta-D-ribosyl)imidazole + S-adenosyl-L-methionine = 4-amino-2-methyl-5-(phosphooxymethyl)pyrimidine + CO + 5'-deoxyadenosine + formate + L-methionine + 3 H(+). The protein operates within cofactor biosynthesis; thiamine diphosphate biosynthesis. Catalyzes the synthesis of the hydroxymethylpyrimidine phosphate (HMP-P) moiety of thiamine from aminoimidazole ribotide (AIR) in a radical S-adenosyl-L-methionine (SAM)-dependent reaction. The chain is Phosphomethylpyrimidine synthase from Acinetobacter baumannii (strain AB0057).